Here is an 862-residue protein sequence, read N- to C-terminus: Protein SEY1 (862 aa).

At 1-743 the chain is on the cytoplasmic side; the sequence is MASNGHFSSV…KRSAIGGITQ (743 aa). The 254-residue stretch at 48–301 folds into the GB1/RHD3-type G domain; it reads GFNYHLISVF…IPADGFAVYA (254 aa). Residue 58–65 coordinates GTP; that stretch reads GSQSTGKS. Residues 476–500 adopt a coiled-coil conformation; the sequence is SDYKQELSLFQKDLEKISSQLRKDE. A helical transmembrane segment spans residues 744-764; that stretch reads VPLYFYGLLLALGWNEIIAVL. At 765–767 the chain is on the lumenal side; it reads RNP. A helical transmembrane segment spans residues 768 to 788; it reads IYFIFLLLIGVGAYVTFRLNL. The Cytoplasmic segment spans residues 789-862; the sequence is WGPMINMAEA…TSDDDNDDDL (74 aa). The segment at 818-862 is disordered; sequence SDSGRQAMAMSGRNARGTEEYEMSSNLKSKGRRTDTSDDDNDDDL.

This sequence belongs to the TRAFAC class dynamin-like GTPase superfamily. GB1/RHD3 GTPase family. RHD3 subfamily.

The protein localises to the endoplasmic reticulum membrane. Functionally, cooperates with the reticulon proteins and tubule-shaping DP1 family proteins to generate and maintain the structure of the tubular endoplasmic reticulum network. Has GTPase activity, which is required for its function in ER organization. This is Protein SEY1 from Arthroderma otae (strain ATCC MYA-4605 / CBS 113480) (Microsporum canis).